The following is a 218-amino-acid chain: Adenylate kinase (218 aa).

10 to 15 (GAGKGT) is a binding site for ATP. The segment at 30-59 (STGDMLRAAIAKGTPLGLSAQKIMESGGLV) is NMP. AMP contacts are provided by residues Thr31, Arg36, 57–59 (GLV), 85–88 (GFPR), and Gln92. Residues 122-159 (GRRIHQPSGRVYHVVNQPPKNPGVDDITGEPLIQRDDD) are LID. Residues Arg123 and 132-133 (VY) contribute to the ATP site. AMP is bound by residues Arg156 and Arg167. Position 203 (Gly203) interacts with ATP.

This sequence belongs to the adenylate kinase family. In terms of assembly, monomer.

It localises to the cytoplasm. It carries out the reaction AMP + ATP = 2 ADP. Its pathway is purine metabolism; AMP biosynthesis via salvage pathway; AMP from ADP: step 1/1. Its function is as follows. Catalyzes the reversible transfer of the terminal phosphate group between ATP and AMP. Plays an important role in cellular energy homeostasis and in adenine nucleotide metabolism. In Legionella pneumophila (strain Corby), this protein is Adenylate kinase.